The sequence spans 246 residues: Protein lin-37 homolog (246 aa).

At Met1 the chain carries N-acetylmethionine. Glycyl lysine isopeptide (Lys-Gly) (interchain with G-Cter in SUMO2) cross-links involve residues Lys5 and Lys7. The segment covering 36–55 has biased composition (basic and acidic residues); that stretch reads DRERLDEEPGKTSLDTHNKD. Disordered regions lie at residues 36 to 90 and 127 to 209; these read DRER…GGPQ and PTVR…LIYR. Ser135 and Ser138 each carry phosphoserine. The span at 163-172 shows a compositional bias: pro residues; sequence LPPPTAPGPP. Thr167 carries the phosphothreonine modification. A phosphoserine mark is found at Ser182 and Ser202.

Component of the DREAM complex (also named LINC complex) at least composed of E2F4, E2F5, LIN9, LIN37, LIN52, LIN54, MYBL1, MYBL2, RBL1, RBL2, RBBP4, TFDP1 and TFDP2. The complex exists in quiescent cells where it represses cell cycle-dependent genes. It dissociates in S phase when LIN9, LIN37, LIN52 and LIN54 form a subcomplex that binds to MYBL2.

The sequence is that of Protein lin-37 homolog (LIN37) from Bos taurus (Bovine).